The chain runs to 167 residues: Brain ribonuclease (167 aa).

The first 26 residues, 1-26 (MALKSLVLLSLLVLVLLLVQVQPSLG), serve as a signal peptide directing secretion. K33 and R36 together coordinate substrate. H38 acts as the Proton acceptor in catalysis. Disulfide bonds link C52-C110, C66-C121, C84-C136, and C91-C98. 67 to 71 (KPVNT) lines the substrate pocket. N88 is a glycosylation site (N-linked (GlcNAc...) asparagine). Substrate-binding residues include K92 and R111. The active-site Proton donor is H145. T155 carries O-linked (GalNAc...) threonine glycosylation. O-linked (GalNAc...) serine glycosylation is present at S159.

It belongs to the pancreatic ribonuclease family.

Its subcellular location is the secreted. In Bos taurus (Bovine), this protein is Brain ribonuclease (BRN).